A 43-amino-acid polypeptide reads, in one-letter code: Hainantoxin F5-22.36 (43 aa).

Disulfide bonds link C1–C19, C8–C24, and C18–C38.

This sequence belongs to the neurotoxin 14 (magi-1) family. 02 (HWTX-XVIc) subfamily. As to expression, expressed by the venom gland.

Its subcellular location is the secreted. Its function is as follows. Probable ion channel inhibitor. This is Hainantoxin F5-22.36 from Cyriopagopus hainanus (Chinese bird spider).